The sequence spans 714 residues: Calpain-1 catalytic subunit (714 aa).

Residues 55–354 enclose the Calpain catalytic domain; it reads LFRDEAFPPV…FTRLEICNLT (300 aa). 2 residues coordinate Ca(2+): glutamine 109 and aspartate 114. Active-site residues include cysteine 115, histidine 272, and asparagine 296. The Ca(2+) site is built by serine 316, aspartate 318, and glutamate 323. Threonine 354 bears the Phosphothreonine mark. Positions 355 to 526 are domain III; that stretch reads PDALKSRTIR…KSAGTAELDD (172 aa). The segment at 527–542 is linker; that stretch reads QIQANLPDEQVLSEEE. 4 consecutive EF-hand domains span residues 541–576, 585–618, 615–650, and 680–714; these read EEIDENFKALFRQLAGEDMEISVKELRTILNRIISK, FSLESCRSMVNLMDRDGNGKLGLVEFNILWNRIR, NRIRNYLSIFRKFDLDKSGSMSAYEMRMAIESAGFK, and VRLETMFRFFKTLDTDLDGVVTFDLFKWLQLTMFA. A domain IV region spans residues 543–713; sequence IDENFKALFR…LFKWLQLTMF (171 aa). The Ca(2+) site is built by aspartate 598, aspartate 600, asparagine 602, lysine 604, glutamate 609, aspartate 628, aspartate 630, serine 632, serine 634, and glutamate 639.

Belongs to the peptidase C2 family. In terms of assembly, forms a heterodimer with a small (regulatory) subunit (CAPNS1). The cofactor is Ca(2+). Undergoes calcium-induced successive autoproteolytic cleavages that generate a membrane-bound 78 kDa active form and an intracellular 75 kDa active form. Calpastatin reduces with high efficiency the transition from 78 kDa to 75 kDa calpain forms. In terms of tissue distribution, ubiquitous.

The protein resides in the cytoplasm. It is found in the cell membrane. The enzyme catalyses Broad endopeptidase specificity.. Activated by micromolar concentrations of calcium and inhibited by calpastatin. In terms of biological role, calcium-regulated non-lysosomal thiol-protease which catalyze limited proteolysis of substrates involved in cytoskeletal remodeling and signal transduction. Proteolytically cleaves CTBP1. Cleaves and activates caspase-7 (CASP7). This chain is Calpain-1 catalytic subunit (CAPN1), found in Macaca fascicularis (Crab-eating macaque).